A 483-amino-acid chain; its full sequence is Cobyric acid synthase (483 aa).

A GATase cobBQ-type domain is found at 252 to 439 (KLNVVVPVLT…LHGFFDEAEA (188 aa)). Cysteine 333 (nucleophile) is an active-site residue. Histidine 431 is an active-site residue.

It belongs to the CobB/CobQ family. CobQ subfamily.

It functions in the pathway cofactor biosynthesis; adenosylcobalamin biosynthesis. In terms of biological role, catalyzes amidations at positions B, D, E, and G on adenosylcobyrinic A,C-diamide. NH(2) groups are provided by glutamine, and one molecule of ATP is hydrogenolyzed for each amidation. The polypeptide is Cobyric acid synthase (Vibrio parahaemolyticus serotype O3:K6 (strain RIMD 2210633)).